An 852-amino-acid chain; its full sequence is Protein SEY1 (852 aa).

At 1 to 738 (MNGHFAAIGN…KRSAIGGITQ (738 aa)) the chain is on the cytoplasmic side. Positions 47–294 (GFNYHLISVF…IPADGLSVYA (248 aa)) constitute a GB1/RHD3-type G domain. 57–64 (GSQSTGKS) serves as a coordination point for GTP. Positions 475–500 (QYKLFEKELDEVSARLRKEEMRRLAI) form a coiled coil. The chain crosses the membrane as a helical span at residues 739-759 (VPLYFYVILLILGWNEILMVL). Over 760–762 (RNP) the chain is Lumenal. Residues 763–783 (FLILLILVMGGGTYIAYSLNL) traverse the membrane as a helical segment. Topologically, residues 784–852 (LGPMMQMSNA…AQDISDDDDI (69 aa)) are cytoplasmic.

Belongs to the TRAFAC class dynamin-like GTPase superfamily. GB1/RHD3 GTPase family. RHD3 subfamily.

The protein localises to the endoplasmic reticulum membrane. Functionally, cooperates with the reticulon proteins and tubule-shaping DP1 family proteins to generate and maintain the structure of the tubular endoplasmic reticulum network. Has GTPase activity, which is required for its function in ER organization. This chain is Protein SEY1, found in Podospora anserina (strain S / ATCC MYA-4624 / DSM 980 / FGSC 10383) (Pleurage anserina).